A 436-amino-acid chain; its full sequence is Trigger factor (436 aa).

One can recognise a PPIase FKBP-type domain in the interval 161-246 (DLRVNMDFVG…LNKVEKQDLP (86 aa)).

This sequence belongs to the FKBP-type PPIase family. Tig subfamily.

Its subcellular location is the cytoplasm. The catalysed reaction is [protein]-peptidylproline (omega=180) = [protein]-peptidylproline (omega=0). In terms of biological role, involved in protein export. Acts as a chaperone by maintaining the newly synthesized protein in an open conformation. Functions as a peptidyl-prolyl cis-trans isomerase. This is Trigger factor from Tolumonas auensis (strain DSM 9187 / NBRC 110442 / TA 4).